A 306-amino-acid chain; its full sequence is MSTLGHQYDNSLVSNAFGFLRLPLNFQPYDSDADWVITGVPFDMATSGRAGGRHGPAAIRQVSTNLAWEHNRFPWNFDMRERLNVVDCGDLVYAFGDAREMSEKLQAHAEKLLSAGKRMLSFGGDHFVTLPLLRAHAKHFGKMALVHFDAHTDTYANGCEFDHGTMFYTAPKEGLIDPNHSVQIGIRTEFDKDNGFTVLDACQVNDRGVDDIIAQVNQIVGDMPVYLTFDIDCLDPAFAPGTGTPVIGGLTSDRAIKLVRGLKDLNIVGMDVVEVAPAYDQSEITALAAATLALEMLYIQAAKKGE.

Mn(2+) is bound by residues His126, Asp149, His151, Asp153, Asp230, and Asp232.

This sequence belongs to the arginase family. Agmatinase subfamily. Mn(2+) serves as cofactor.

It carries out the reaction agmatine + H2O = urea + putrescine. Its pathway is amine and polyamine biosynthesis; putrescine biosynthesis via agmatine pathway; putrescine from agmatine: step 1/1. Catalyzes the formation of putrescine from agmatine. In Citrobacter koseri (strain ATCC BAA-895 / CDC 4225-83 / SGSC4696), this protein is Agmatinase.